Consider the following 326-residue polypeptide: MLTFARQQQRRNVRWLLSLSLLVLLATLLSLCAGEQWIAPGDWLSARGELFVWQIRLPRTLAVLLVGAALALSGAVMQALFENPLAEPGLLGVSNGAGVGLIAAVLLGQGQLAGWALGLCAIAGALIITLILLRFARRHLSTSRLLLAGVALGIICSALMTWAIYFSTSFDLRQLMYWMMGGFGGVDWQQSWLMIALIPVLIWICCQSQPLNMLALGETSARQLGLPLWFWRNLLVVATGWMVGVSVAMAGAIGFIGLVIPHILRLCGLTDHRVLLPGCALAGAIALLLADVVARLALASAELPIGVVTATLGAPVFIWLLLKSAR.

9 helical membrane passes run 17–39 (LSLS…QWIA), 59–81 (RTLA…QALF), 88–107 (PGLL…AVLL), 111–133 (QLAG…LILL), 146–168 (LLAG…YFST), 188–205 (WQQS…IWIC), 242–264 (MVGV…PHIL), 274–296 (VLLP…VARL), and 303–322 (LPIG…WLLL).

Belongs to the binding-protein-dependent transport system permease family. FecCD subfamily. As to quaternary structure, the complex is composed of two ATP-binding proteins (BtuD), two transmembrane proteins (BtuC) and a solute-binding protein (BtuF).

Its subcellular location is the cell inner membrane. In terms of biological role, part of the ABC transporter complex BtuCDF involved in vitamin B12 import. Involved in the translocation of the substrate across the membrane. This chain is Vitamin B12 import system permease protein BtuC, found in Salmonella paratyphi A (strain ATCC 9150 / SARB42).